Reading from the N-terminus, the 60-residue chain is Myrmicitoxin(1)-Pr4c (60 aa).

The signal sequence occupies residues Met-1 to Gly-23. The propeptide occupies Glu-24–Ser-33. Glutamine amide is present on Gln-59.

Belongs to the formicidae venom clade 2 family. Expressed by the venom gland.

The protein localises to the secreted. In terms of biological role, toxin that causes a rapid and irreversible paralysis when intrathoracically injected into insects (blowflies). Does not cause spontaneous nocifensive behaviors by intraplantar injection in mice. The sequence is that of Myrmicitoxin(1)-Pr4c from Pogonomyrmex rugosus (Desert harvester ant).